We begin with the raw amino-acid sequence, 68 residues long: Peptide Hp1090 (68 aa).

A signal peptide spans 1 to 23 (MKTQFAIFLITLVLFQMFSQSDA). Phenylalanine amide is present on Phe-36. Residues 40-68 (GLSDLDDLDESFDGEVSQADIDFLKELMQ) constitute a propeptide that is removed on maturation.

Belongs to the non-disulfide-bridged peptide (NDBP) superfamily. Short antimicrobial peptide (group 4) family. Expressed by the venom gland.

It is found in the secreted. Its subcellular location is the target cell membrane. Its function is as follows. Amphipathic peptide which inhibits the growth of Gram-positive bacteria. This Heterometrus petersii (Asian forest scorpion) protein is Peptide Hp1090.